Consider the following 1032-residue polypeptide: tRNA wybutosine-synthesizing protein 4 (1032 aa).

Residues Arg-69, Gly-95, Asp-122, Asp-169–Leu-170, and Glu-196 each bind S-adenosyl-L-methionine. The disordered stretch occupies residues Glu-702–Pro-726. Positions Ser-716–Glu-725 are enriched in polar residues. One can recognise a JmjC domain in the interval Pro-833 to Arg-988.

It belongs to the methyltransferase superfamily. LCMT family.

The enzyme catalyses 7-[(3S)-3-amino-3-carboxypropyl]wyosine(37) in tRNA(Phe) + S-adenosyl-L-methionine = 7-[(3S)-(3-amino-3-methoxycarbonyl)propyl]wyosine(37) in tRNA(Phe) + S-adenosyl-L-homocysteine. It catalyses the reaction 7-[(3S)-(3-amino-3-methoxycarbonyl)propyl]wyosine(37) in tRNA(Phe) + S-adenosyl-L-methionine + CO2 = wybutosine(37) in tRNA(Phe) + S-adenosyl-L-homocysteine + 2 H(+). It functions in the pathway tRNA modification; wybutosine-tRNA(Phe) biosynthesis. Its function is as follows. Probable S-adenosyl-L-methionine-dependent methyltransferase that acts as a component of the wybutosine biosynthesis pathway. Wybutosine is a hyper modified guanosine with a tricyclic base found at the 3'-position adjacent to the anticodon of eukaryotic phenylalanine tRNA. May methylate the carboxyl group of leucine residues to form alpha-leucine ester residues. This chain is tRNA wybutosine-synthesizing protein 4 (ppm2), found in Aspergillus oryzae (strain ATCC 42149 / RIB 40) (Yellow koji mold).